Here is a 548-residue protein sequence, read N- to C-terminus: Glucose-6-phosphate isomerase (548 aa).

Glu-355 (proton donor) is an active-site residue. Active-site residues include His-386 and Lys-514.

Belongs to the GPI family.

Its subcellular location is the cytoplasm. The enzyme catalyses alpha-D-glucose 6-phosphate = beta-D-fructose 6-phosphate. It participates in carbohydrate biosynthesis; gluconeogenesis. The protein operates within carbohydrate degradation; glycolysis; D-glyceraldehyde 3-phosphate and glycerone phosphate from D-glucose: step 2/4. In terms of biological role, catalyzes the reversible isomerization of glucose-6-phosphate to fructose-6-phosphate. The polypeptide is Glucose-6-phosphate isomerase (Yersinia enterocolitica serotype O:8 / biotype 1B (strain NCTC 13174 / 8081)).